We begin with the raw amino-acid sequence, 439 residues long: MAGEFYDSARIFVQAGDGGDGAATFRREKYVPRGGPDGGDGGRGGHVYLVADPGLNTLLPFRERTRFIAERGGNGGRSRKHGRNGRDVFIRVPVGTVARTVIDGETYSVDLDAPGLRLLAARGGRGGLGNVHFATSSYQVPRIAELGEPGERREIELELKLLADVGLIGFPNAGKSTLLSVISAARPKIAPYPFTTLQPNLGVVEVGEYSFVVADIPGLIEGAHRGVGLGFSFLRHIERTRLLIHIIDAAGVDGRDPVNDFSAINEELRLYQPALAQRPQVVALNKADLPEAQANLKRLRAAIPVSEQDLFVISAATREGVDALLQRVAERLREMPAPHRAPRDETLTWPVPEVDERLYTIERTGDGWRVRGRRIERLISMTNFAQPDAIMRIQRVLEASGIGAALQEAGIQNGDVLYIEQAAFDWEDGAITYRMPGVS.

An Obg domain is found at 3–162; that stretch reads GEFYDSARIF…REIELELKLL (160 aa). An OBG-type G domain is found at 163–333; it reads ADVGLIGFPN…LLQRVAERLR (171 aa). GTP contacts are provided by residues 169-176, 194-198, 215-218, 285-288, and 314-316; these read GFPNAGKS, FTTLQ, DIPG, NKAD, and SAA. Mg(2+) is bound by residues S176 and T196. The OCT domain maps to 351–428; the sequence is VPEVDERLYT…IEQAAFDWED (78 aa).

Belongs to the TRAFAC class OBG-HflX-like GTPase superfamily. OBG GTPase family. In terms of assembly, monomer. Requires Mg(2+) as cofactor.

The protein resides in the cytoplasm. An essential GTPase which binds GTP, GDP and possibly (p)ppGpp with moderate affinity, with high nucleotide exchange rates and a fairly low GTP hydrolysis rate. Plays a role in control of the cell cycle, stress response, ribosome biogenesis and in those bacteria that undergo differentiation, in morphogenesis control. The sequence is that of GTPase Obg from Roseiflexus castenholzii (strain DSM 13941 / HLO8).